The following is a 401-amino-acid chain: Adenosine 3'-phospho 5'-phosphosulfate transporter 2 (401 aa).

N-linked (GlcNAc...) asparagine glycosylation is found at asparagine 12 and asparagine 71. A run of 6 helical transmembrane segments spans residues leucine 78–leucine 98, tyrosine 114–isoleucine 134, methionine 147–leucine 167, proline 170–isoleucine 190, asparagine 196–alanine 216, and asparagine 223–glycine 243. A glycan (N-linked (GlcNAc...) asparagine) is linked at asparagine 254. The next 4 membrane-spanning stretches (helical) occupy residues isoleucine 267–threonine 287, glycine 298–leucine 317, leucine 324–alanine 346, and phenylalanine 349–tyrosine 369.

The protein belongs to the nucleotide-sugar transporter family. SLC35B subfamily. Preferentially and highly expressed in colon.

It localises to the golgi apparatus membrane. It carries out the reaction 3'-phosphoadenylyl sulfate(in) + adenosine 3',5'-bisphosphate(out) = 3'-phosphoadenylyl sulfate(out) + adenosine 3',5'-bisphosphate(in). Probably functions as a 3'-phosphoadenylyl sulfate:adenosine 3',5'-bisphosphate antiporter at the Golgi membranes. Mediates the transport from the cytosol into the lumen of the Golgi of 3'-phosphoadenylyl sulfate/adenosine 3'-phospho 5'-phosphosulfate (PAPS), a universal sulfuryl donor for sulfation events that take place in that compartment. This Homo sapiens (Human) protein is Adenosine 3'-phospho 5'-phosphosulfate transporter 2.